Here is a 204-residue protein sequence, read N- to C-terminus: MKVLIVFYSMYGHIYRMAEAVAEGVRSVDGAEAVLRRVPETLSAEILASMGATEAQKQFAHIPVCTVDELGAADAVIFGTPTRFGNMAGQMRQFLDATGRLWVSGALVGKAGSVFTSSNTQHGGQESTILSFHINLLHQGMVIVGLPYSFQGQSTMDEITGGSPYGASTIAGPTGARTPSDNELAGARYQGRHVAEIARKLTRN.

Residues 3 to 194 (VLIVFYSMYG…AGARYQGRHV (192 aa)) form the Flavodoxin-like domain. Residues 9–14 (SMYGHI) and 82–84 (TRF) each bind FMN. Position 11 (Tyr-11) interacts with NAD(+). Trp-102 serves as a coordination point for substrate. His-138 contributes to the FMN binding site.

Belongs to the WrbA family. The cofactor is FMN.

It carries out the reaction a quinone + NADH + H(+) = a quinol + NAD(+). The enzyme catalyses a quinone + NADPH + H(+) = a quinol + NADP(+). The chain is NAD(P)H dehydrogenase (quinone) from Syntrophobacter fumaroxidans (strain DSM 10017 / MPOB).